The primary structure comprises 184 residues: Peptide deformylase 2 (184 aa).

Fe cation contacts are provided by Cys110 and His153. The active site involves Glu154. Position 157 (His157) interacts with Fe cation.

This sequence belongs to the polypeptide deformylase family. The cofactor is Fe(2+).

The catalysed reaction is N-terminal N-formyl-L-methionyl-[peptide] + H2O = N-terminal L-methionyl-[peptide] + formate. Removes the formyl group from the N-terminal Met of newly synthesized proteins. Requires at least a dipeptide for an efficient rate of reaction. N-terminal L-methionine is a prerequisite for activity but the enzyme has broad specificity at other positions. The sequence is that of Peptide deformylase 2 (defB) from Bacillus subtilis (strain 168).